Reading from the N-terminus, the 512-residue chain is Serine palmitoyltransferase 3 (512 aa).

At lysine 345 the chain carries N6-(pyridoxal phosphate)lysine.

Belongs to the class-II pyridoxal-phosphate-dependent aminotransferase family. In terms of assembly, heterodimer of sptl-1/sptl-3. It depends on pyridoxal 5'-phosphate as a cofactor.

The catalysed reaction is L-serine + hexadecanoyl-CoA + H(+) = 3-oxosphinganine + CO2 + CoA. It functions in the pathway lipid metabolism; sphingolipid metabolism. Functionally, component of the serine palmitoyltransferase (SPT) that catalyzes the first committed step in sphingolipid biosynthesis, which is the condensation of an acyl-CoA species and L-serine. The catalytic core is composed of a heterodimer of sptl-1 and sptl-2 or sptl-1 and sptl-3. Required for the specification of abicobasal polarity and development of the gut lumen. The polypeptide is Serine palmitoyltransferase 3 (sptl-3) (Caenorhabditis elegans).